The primary structure comprises 250 residues: Probable dihydroorotate dehydrogenase B (NAD(+)), electron transfer subunit (250 aa).

Positions 1–89 (MNRITVDQVR…RGPYGNGFQI (89 aa)) constitute an FAD-binding FR-type domain. [2Fe-2S] cluster is bound by residues C200, C205, C208, and C216.

It belongs to the PyrK family. In terms of assembly, heterotetramer of 2 PyrK and 2 PyrD type B subunits. [2Fe-2S] cluster is required as a cofactor. Requires FAD as cofactor.

It functions in the pathway pyrimidine metabolism; UMP biosynthesis via de novo pathway; orotate from (S)-dihydroorotate (NAD(+) route): step 1/1. Its function is as follows. Responsible for channeling the electrons from the oxidation of dihydroorotate from the FMN redox center in the PyrD type B subunit to the ultimate electron acceptor NAD(+). The protein is Probable dihydroorotate dehydrogenase B (NAD(+)), electron transfer subunit of Thermoplasma acidophilum (strain ATCC 25905 / DSM 1728 / JCM 9062 / NBRC 15155 / AMRC-C165).